Reading from the N-terminus, the 160-residue chain is Biogenesis of lysosome-related organelles complex 1 subunit 5 (160 aa).

It belongs to the BLOC1S5 family. In terms of assembly, component of the biogenesis of lysosome-related organelles complex-1 (BLOC-1) composed of Blos1, Blos2, Blos3, Blos4, Dysb, Muted, Pldn and Snapin.

Functionally, component of the biogenesis of lysosome-related organelles complex-1 (BLOC-1) involved in pigment granule biogenesis. This chain is Biogenesis of lysosome-related organelles complex 1 subunit 5, found in Drosophila melanogaster (Fruit fly).